We begin with the raw amino-acid sequence, 505 residues long: ATP synthase subunit alpha (505 aa).

Residue 169-176 (GDRQIGKT) participates in ATP binding.

Belongs to the ATPase alpha/beta chains family. In terms of assembly, F-type ATPases have 2 components, CF(1) - the catalytic core - and CF(0) - the membrane proton channel. CF(1) has five subunits: alpha(3), beta(3), gamma(1), delta(1), epsilon(1). CF(0) has three main subunits: a(1), b(2) and c(9-12). The alpha and beta chains form an alternating ring which encloses part of the gamma chain. CF(1) is attached to CF(0) by a central stalk formed by the gamma and epsilon chains, while a peripheral stalk is formed by the delta and b chains.

It is found in the cell inner membrane. The enzyme catalyses ATP + H2O + 4 H(+)(in) = ADP + phosphate + 5 H(+)(out). In terms of biological role, produces ATP from ADP in the presence of a proton gradient across the membrane. The alpha chain is a regulatory subunit. The protein is ATP synthase subunit alpha of Desulfosudis oleivorans (strain DSM 6200 / JCM 39069 / Hxd3) (Desulfococcus oleovorans).